We begin with the raw amino-acid sequence, 203 residues long: LexA repressor (203 aa).

The segment at residues 28–48 is a DNA-binding region (H-T-H motif); that stretch reads VRELCDELGFKSPNTAHFHLK. Catalysis depends on for autocatalytic cleavage activity residues Ser122 and Lys159.

The protein belongs to the peptidase S24 family. In terms of assembly, homodimer.

It catalyses the reaction Hydrolysis of Ala-|-Gly bond in repressor LexA.. Its function is as follows. Represses a number of genes involved in the response to DNA damage (SOS response), including recA and lexA. In the presence of single-stranded DNA, RecA interacts with LexA causing an autocatalytic cleavage which disrupts the DNA-binding part of LexA, leading to derepression of the SOS regulon and eventually DNA repair. The polypeptide is LexA repressor (Desulfatibacillum aliphaticivorans).